Consider the following 188-residue polypeptide: Elongation factor P (188 aa).

The protein belongs to the elongation factor P family.

Its subcellular location is the cytoplasm. The protein operates within protein biosynthesis; polypeptide chain elongation. In terms of biological role, involved in peptide bond synthesis. Stimulates efficient translation and peptide-bond synthesis on native or reconstituted 70S ribosomes in vitro. Probably functions indirectly by altering the affinity of the ribosome for aminoacyl-tRNA, thus increasing their reactivity as acceptors for peptidyl transferase. The polypeptide is Elongation factor P (Phenylobacterium zucineum (strain HLK1)).